The chain runs to 310 residues: Solute carrier family 25 member 47 (310 aa).

Solcar repeat units follow at residues 1–80, 93–208, and 217–304; these read MDFV…CLAH, PTKA…LCEW, and PDVL…VLRL. 6 helical membrane-spanning segments follow: residues 3 to 23, 55 to 75, 98 to 114, 194 to 210, 219 to 239, and 280 to 298; these read FVAGAIGGVCGVAVGYPLDTV, GLSLPVCTVSLVSSVSFGTYH, ITLSGCASGLVRVFLTS, SFATYFLSYAMLCEWLT, VLGVLVAGGCAGVLAWAVATP, and LALNCCRAFPVNMVVFVAY.

Belongs to the mitochondrial carrier (TC 2.A.29) family. In terms of tissue distribution, specifically expressed in liver (at protein level).

It localises to the mitochondrion inner membrane. The protein localises to the mitochondrion outer membrane. It catalyses the reaction NAD(+)(in) = NAD(+)(out). The catalysed reaction is acetyl-CoA(in) = acetyl-CoA(out). Mitochondrial NAD(+) transporter that acts as a 'metabolic gate' in hepatic lipogenesis. Provides NAD(+) substrate to mitochondrial SIRT3 deacetylase and enables its NAD(+)-dependent activities in mitochondrial energy metabolism. This triggers downstream activation of PRKAA1/AMPK-alpha signaling cascade that negatively regulates sterol regulatory element-binding protein (SREBP) transcriptional activities and ATP-consuming lipogenesis to restore cellular energy balance. May transport other mitochondrial metabolites having an aromatic nucleotide and phosphate groups, such as acetyl-CoA. Does not transport amino acids. The transport mechanism remains to be elucidated. The polypeptide is Solute carrier family 25 member 47 (Mus musculus (Mouse)).